Consider the following 245-residue polypeptide: 4-hydroxy-tetrahydrodipicolinate reductase (245 aa).

NAD(+) is bound by residues 7 to 12, 75 to 77, and 102 to 105; these read GAKGKV, GTT, and APNF. Histidine 132 serves as the catalytic Proton donor/acceptor. Histidine 133 serves as a coordination point for (S)-2,3,4,5-tetrahydrodipicolinate. Lysine 136 functions as the Proton donor in the catalytic mechanism. 142-143 provides a ligand contact to (S)-2,3,4,5-tetrahydrodipicolinate; it reads GT.

This sequence belongs to the DapB family.

The protein localises to the cytoplasm. It catalyses the reaction (S)-2,3,4,5-tetrahydrodipicolinate + NAD(+) + H2O = (2S,4S)-4-hydroxy-2,3,4,5-tetrahydrodipicolinate + NADH + H(+). The catalysed reaction is (S)-2,3,4,5-tetrahydrodipicolinate + NADP(+) + H2O = (2S,4S)-4-hydroxy-2,3,4,5-tetrahydrodipicolinate + NADPH + H(+). It participates in amino-acid biosynthesis; L-lysine biosynthesis via DAP pathway; (S)-tetrahydrodipicolinate from L-aspartate: step 4/4. In terms of biological role, catalyzes the conversion of 4-hydroxy-tetrahydrodipicolinate (HTPA) to tetrahydrodipicolinate. This chain is 4-hydroxy-tetrahydrodipicolinate reductase, found in Mycobacterium sp. (strain KMS).